The chain runs to 115 residues: Large ribosomal subunit protein P2 (115 aa).

An N-acetylmethionine modification is found at methionine 1. Serine 17 and serine 19 each carry phosphoserine. Position 21 is an N6-acetyllysine; alternate (lysine 21). Lysine 21 is subject to N6-succinyllysine; alternate. The segment covering 69–90 has biased composition (low complexity); that stretch reads GAXAVAAAPGSXAPAAGSAPAA. The disordered stretch occupies residues 69–115; that stretch reads GAXAVAAAPGSXAPAAGSAPAAAEEKKEEKKEESEESDDDMGFGLFD. Serine 79 and serine 86 each carry phosphoserine. Basic and acidic residues predominate over residues 91–101; that stretch reads AEEKKEEKKEE. Phosphoserine is present on residues serine 102 and serine 105.

This sequence belongs to the eukaryotic ribosomal protein P1/P2 family. As to quaternary structure, heterodimer with RPLP1 at the lateral ribosomal stalk of the large ribosomal subunit.

Functionally, plays an important role in the elongation step of protein synthesis. The polypeptide is Large ribosomal subunit protein P2 (RPLP2) (Sus scrofa (Pig)).